Consider the following 893-residue polypeptide: UPF0182 protein CLI_0022 (893 aa).

7 helical membrane passes run 9–29 (IPLFIIILFIAFFNKIINFII), 49–69 (AIIILMIPIFIIFFISIWMYY), 94–114 (LFFIFNFIVSIFLAYIFSSSY), 154–174 (VIISLLLFLVITTFIAYFILE), 202–222 (LAIVSGLIILFISFGHLIKIW), 246–266 (FYKIIVVITLISSIVTLLSIV), and 273–293 (VSICIGITIFLIVSQNIASFL).

Belongs to the UPF0182 family.

It is found in the cell membrane. The protein is UPF0182 protein CLI_0022 of Clostridium botulinum (strain Langeland / NCTC 10281 / Type F).